Here is a 428-residue protein sequence, read N- to C-terminus: Gamma-glutamyl phosphate reductase (428 aa).

The protein belongs to the gamma-glutamyl phosphate reductase family.

The protein resides in the cytoplasm. The catalysed reaction is L-glutamate 5-semialdehyde + phosphate + NADP(+) = L-glutamyl 5-phosphate + NADPH + H(+). It participates in amino-acid biosynthesis; L-proline biosynthesis; L-glutamate 5-semialdehyde from L-glutamate: step 2/2. Functionally, catalyzes the NADPH-dependent reduction of L-glutamate 5-phosphate into L-glutamate 5-semialdehyde and phosphate. The product spontaneously undergoes cyclization to form 1-pyrroline-5-carboxylate. The polypeptide is Gamma-glutamyl phosphate reductase (Hyphomonas neptunium (strain ATCC 15444)).